The primary structure comprises 118 residues: Disulfide bond formation protein (118 aa).

An N-terminal signal peptide occupies residues 1 to 27 (MRAKWLWMTAVGSLLITVLTAWGWAAA). Residues 28–114 (SSQDSKIVYV…VAEAVLRSFF (87 aa)) enclose the Thioredoxin domain. Residues Cys-42 and Cys-45 are joined by a disulfide bond.

This sequence belongs to the thioredoxin family.

The protein localises to the secreted. Its function is as follows. Stimulates the oxidation and reduction of disulfide bonds in vitro. The chain is Disulfide bond formation protein (bdb) from Brevibacillus choshinensis.